We begin with the raw amino-acid sequence, 574 residues long: Developmental and secondary metabolism regulator veA (574 aa).

Disordered regions lie at residues 1–22, 39–60, 255–500, and 513–548; these read MATR…SRIT, ERAR…VDPP, RSSD…GAGK, and RSYE…GRNF. One can recognise a Velvet domain in the interval 25 to 230; it reads GKKLTYKLNV…AEQGCRVRIR (206 aa). The Nuclear localization signal signature appears at 39–44; sequence ERARAC. Composition is skewed to pro residues over residues 314-323 and 330-341; these read RPMPPAPVPA and PAPPAPPAPPSH. Polar residues-rich tracts occupy residues 343-359, 385-394, 402-415, and 448-458; these read PGYQ…TQYP, HARNPSTSAE, YPSS…SSYP, and VAQSAGPRSQT. Positions 457-501 are PEST; it reads QTPSSSLVPSLPPLKALSGDYPNNLSQPSSSISQSPSHDLGAGKK. Low complexity-rich tracts occupy residues 459–474 and 482–493; these read PSSS…KALS and SQPSSSISQSPS. Basic and acidic residues-rich tracts occupy residues 513-525 and 532-543; these read RSYE…DDRP and PDTESHPRRLSD.

The protein belongs to the velvet family. VeA subfamily. In terms of assembly, component of the heterotrimeric velvet complex composed of laeA, veA and velB; VeA acting as a bridging protein between laeA and velB.

It localises to the nucleus. The protein resides in the cytoplasm. In terms of biological role, component of the velvet transcription factor complex that controls sexual/asexual developmental ratio in response to light, promoting sexual development in the darkness while stimulating asexual sporulation under illumination. The velvet complex hat acts as a global regulator for secondary metabolite gene expression. Controls the expression of the aflatoxin gene cluster. Required for the expression of aflR and aflJ. Mediates the coordination of aflatoxigenic vesicles (aflatoxisomes) development with aflatoxin gene expression. Regulates branched chain amino acid and ethanol metabolism and acts as a positive regulator of mitochondrial and peroxisomal beta-oxidation. This is Developmental and secondary metabolism regulator veA from Aspergillus parasiticus.